The primary structure comprises 591 residues: L-fucose isomerase (591 aa).

Active-site proton acceptor residues include Glu-338 and Asp-362. The Mn(2+) site is built by Glu-338, Asp-362, and His-529.

This sequence belongs to the L-fucose isomerase family. Mn(2+) is required as a cofactor.

It localises to the cytoplasm. It carries out the reaction L-fucose = L-fuculose. It participates in carbohydrate degradation; L-fucose degradation; L-lactaldehyde and glycerone phosphate from L-fucose: step 1/3. Its function is as follows. Converts the aldose L-fucose into the corresponding ketose L-fuculose. The sequence is that of L-fucose isomerase from Phocaeicola vulgatus (strain ATCC 8482 / DSM 1447 / JCM 5826 / CCUG 4940 / NBRC 14291 / NCTC 11154) (Bacteroides vulgatus).